Consider the following 195-residue polypeptide: ATP-dependent Clp protease proteolytic subunit (195 aa).

Catalysis depends on Ser-98, which acts as the Nucleophile. His-123 is an active-site residue.

It belongs to the peptidase S14 family. As to quaternary structure, fourteen ClpP subunits assemble into 2 heptameric rings which stack back to back to give a disk-like structure with a central cavity, resembling the structure of eukaryotic proteasomes.

The protein resides in the cytoplasm. The catalysed reaction is Hydrolysis of proteins to small peptides in the presence of ATP and magnesium. alpha-casein is the usual test substrate. In the absence of ATP, only oligopeptides shorter than five residues are hydrolyzed (such as succinyl-Leu-Tyr-|-NHMec, and Leu-Tyr-Leu-|-Tyr-Trp, in which cleavage of the -Tyr-|-Leu- and -Tyr-|-Trp bonds also occurs).. Its function is as follows. Cleaves peptides in various proteins in a process that requires ATP hydrolysis. Has a chymotrypsin-like activity. Plays a major role in the degradation of misfolded proteins. This chain is ATP-dependent Clp protease proteolytic subunit, found in Wolinella succinogenes (strain ATCC 29543 / DSM 1740 / CCUG 13145 / JCM 31913 / LMG 7466 / NCTC 11488 / FDC 602W) (Vibrio succinogenes).